Consider the following 1072-residue polypeptide: 5'-3' exoribonuclease 2 (1072 aa).

The stretch at 118–144 forms a coiled coil; it reads RRFRAAREAMEKEEDKQKFVELLKKQN. The CCHC-type zinc-finger motif lies at 269-286; it reads RLCKICGQKGHDAMNCKG. Residues 414–435 show a composition bias toward basic and acidic residues; sequence KETEDRREAGFKRRKLADEARQ. Disordered stretches follow at residues 414–459, 509–577, 865–911, and 943–1072; these read KETE…GFSF, QGTS…AEPT, ASRS…GGGG, and GGGY…RGYR. Residues 518–543 are compositionally biased toward low complexity; it reads AESTETPAETAAAAPATEEQAAPPAA. The span at 892-911 shows a compositional bias: gly residues; it reads GPGGGQQGGRGRGGYQGGGG. The segment covering 955 to 967 has biased composition (pro residues); it reads GPPPGWQPPPPPG. 3 stretches are compositionally biased toward gly residues: residues 983–1000, 1025–1036, and 1056–1072; these read AYGG…GSSR, YGQGGSRGGYQG, and GYRG…RGYR.

The protein belongs to the 5'-3' exonuclease family. XRN2/RAT1 subfamily. As to quaternary structure, interacts with rai1; the interaction is direct, stabilizes exr-1 protein structure and may stimulate its exoribonuclease activity. The interaction also stimulates rai1 pyrophosphohydrolase activity, probably by recruiting it to mRNA substrates.

The protein localises to the nucleus. Functionally, possesses 5'-&gt;3' exoribonuclease activity. Required for the processing of nuclear mRNA and rRNA precursors. May promote the termination of transcription by RNA polymerase II. Essential for vegetative cell growth and chromosome segregation. The chain is 5'-3' exoribonuclease 2 (exr-1) from Neurospora crassa (strain ATCC 24698 / 74-OR23-1A / CBS 708.71 / DSM 1257 / FGSC 987).